Reading from the N-terminus, the 1273-residue chain is Paired amphipathic helix protein Sin3a (1273 aa).

2 disordered regions span residues 1-23 and 87-110; these read MKRR…IPGS and HPTA…PPVA. Position 10 is a phosphoserine (serine 10). Residues 119-189 form the PAH 1 domain; it reads QRLKVEDALS…MGFNTFLPPG (71 aa). Positions 119–196 are interaction with HCFC1; it reads QRLKVEDALS…PPGYKIEVQT (78 aa). Glycyl lysine isopeptide (Lys-Gly) (interchain with G-Cter in SUMO2) cross-links involve residues lysine 122 and lysine 134. A disordered region spans residues 205-297; that stretch reads PGQVHQIPTH…ISLGTAPSLQ (93 aa). The segment at 205 to 480 is interaction with REST; sequence PGQVHQIPTH…RKALRSAEAY (276 aa). Over residues 228-237 the composition is skewed to low complexity; sequence SQPSAQSAPA. The segment covering 238 to 248 has biased composition (pro residues); that stretch reads PAQPAPQPPPA. Residues 252-266 are compositionally biased toward polar residues; sequence KPSQLQAHTPASQQT. The segment covering 267 to 282 has biased composition (pro residues); it reads PPLPPYASPRSPPVQP. Phosphoserine is present on serine 277. Threonine 284 bears the Phosphothreonine mark. Positions 284-297 are enriched in polar residues; the sequence is TPVTISLGTAPSLQ. Residues 300–383 enclose the PAH 2 domain; the sequence is QPVEFNHAIN…SEFGQFLPDA (84 aa). Positions 398–446 are disordered; sequence DSVRNDHGGTVKKPQLNNKPQRPSQNGCQIRRHPTGTTPPVKKKPKLLN. The span at 412–425 shows a compositional bias: polar residues; that stretch reads QLNNKPQRPSQNGC. The PAH 3 domain maps to 456-525; that stretch reads SKHGGGTESL…NWFKNFLGYK (70 aa). The interval 458 to 525 is interaction with SAP30; sequence HGGGTESLFF…NWFKNFLGYK (68 aa). Lysine 469 is modified (N6-acetyllysine). The interval 523-850 is interaction with NCOR1; that stretch reads GYKESVHLET…EMDVDEATGA (328 aa). Positions 524–659 are interaction with SUDS3 and SAP130; that stretch reads YKESVHLETY…KFRLDNTLGG (136 aa). Residue lysine 563 forms a Glycyl lysine isopeptide (Lys-Gly) (interchain with G-Cter in SUMO2) linkage. The interaction with HDAC1 and ARID4B stretch occupies residues 687-829; it reads NPSIAVPIVL…IPDLLFAQRG (143 aa). Phosphoserine is present on residues serine 832 and serine 860. Residues lysine 865 and lysine 875 each carry the N6-acetyllysine modification. The interval 888 to 967 is interaction with OGT; the sequence is VNNNWYIFMR…YYPAFLDMVR (80 aa). Positions 903 to 932 form a coiled coil; the sequence is CLRLLRICSQAERQIEEENREREWEREVLG. Phosphoserine is present on residues serine 940, serine 1089, and serine 1112. Residues 1136 to 1156 form a disordered region; sequence CQRGREQQEKEGKEGNSKKTM. A compositionally biased stretch (basic and acidic residues) spans 1138-1156; sequence RGREQQEKEGKEGNSKKTM.

As to quaternary structure, interacts with ARID4B, BRMS1L, HCFC1, HDAC1, HDAC2, MXI1, SAP30L, SAP130, SFPQ and TOPORS. Interacts with OGT (via TPRs 1-6); the interaction mediates transcriptional repression in parallel with histone deacetylase. Interacts with BAZ2A, MXD1, MXD3, MXD4, MBD2, DACH1, NCOR1, NR4A2, REST, RLIM, SAP30, SETDB1, SMYD2, and SUDS3. Interacts with PHF12 in a complex composed of HDAC1, PHF12 and SAP30. Interacts with TET1; the interaction recruits SIN3A to gene promoters. The large PER complex involved in the histone deacetylation is composed of at least HDAC1, PER2, SFPQ and SIN3A. Interacts with KLF11. Interacts with PPHLN1. Found in a complex with YY1, GON4L and HDAC1. Interacts (via PAH2) with FOXK1. Interacts with FOXK2. Found in a complex composed of at least SINHCAF, SIN3A, HDAC1, SAP30, RBBP4, OGT and TET1. Interacts with SINHCAF. Interacts with SPHK2. SUMO1 sumoylated by TOPORS. Probably desumoylated by SENP2. As to expression, expressed in the developing brain, with highest levels of expression detected in the ventricular zone of various cortical regions.

The protein localises to the nucleus. It localises to the nucleolus. In terms of biological role, acts as a transcriptional repressor. Corepressor for REST. Interacts with MXI1 to repress MYC responsive genes and antagonize MYC oncogenic activities. Also interacts with MXD1-MAX heterodimers to repress transcription by tethering SIN3A to DNA. Acts cooperatively with OGT to repress transcription in parallel with histone deacetylation. Involved in the control of the circadian rhythms. Required for the transcriptional repression of circadian target genes, such as PER1, mediated by the large PER complex through histone deacetylation. Cooperates with FOXK1 to regulate cell cycle progression probably by repressing cell cycle inhibitor genes expression. Required for cortical neuron differentiation and callosal axon elongation. The protein is Paired amphipathic helix protein Sin3a of Homo sapiens (Human).